We begin with the raw amino-acid sequence, 560 residues long: Cytosolic purine 5'-nucleotidase (560 aa).

Aspartate 52 acts as the Nucleophile in catalysis. Residues aspartate 52 and aspartate 54 each contribute to the IMP site. Residues aspartate 52 and aspartate 54 each coordinate Mg(2+). The active-site Proton donor is the aspartate 54. The ATP site is built by arginine 144 and asparagine 154. IMP is bound by residues arginine 202, aspartate 206, lysine 215, threonine 249, asparagine 250, serine 251, and lysine 292. Residue aspartate 351 coordinates Mg(2+). Serine 418 bears the Phosphoserine mark. ATP-binding residues include glutamine 453 and arginine 456. A phosphoserine mark is found at serine 502, serine 511, and serine 527. Residues 541–560 (PQEITHCHDEDDDEEEEEEE) form a disordered region. Residues 548–560 (HDEDDDEEEEEEE) are required for tetramer assembly. Residues 550 to 560 (EDDDEEEEEEE) show a composition bias toward acidic residues.

The protein belongs to the 5'(3')-deoxyribonucleotidase family. Homotetramer. The cofactor is Mg(2+).

The protein localises to the cytoplasm. Its subcellular location is the cytosol. It carries out the reaction a ribonucleoside 5'-phosphate + H2O = a ribonucleoside + phosphate. It catalyses the reaction a 2'-deoxyribonucleoside + a ribonucleoside 5'-phosphate = a ribonucleoside + a 2'-deoxyribonucleoside 5'-phosphate. The enzyme catalyses IMP + H2O = inosine + phosphate. The catalysed reaction is GMP + H2O = guanosine + phosphate. It carries out the reaction dIMP + H2O = 2'-deoxyinosine + phosphate. It catalyses the reaction dGMP + H2O = 2'-deoxyguanosine + phosphate. The enzyme catalyses XMP + H2O = xanthosine + phosphate. The catalysed reaction is inosine + GMP = guanosine + IMP. It carries out the reaction dGMP + inosine = 2'-deoxyguanosine + IMP. It catalyses the reaction dIMP + inosine = 2'-deoxyinosine + IMP. The enzyme catalyses inosine + UMP = uridine + IMP. The catalysed reaction is inosine + CMP = cytidine + IMP. It carries out the reaction inosine + AMP = IMP + adenosine. Its activity is regulated as follows. Allosterically activated by various compounds including ATP, 2,3-BPG/2,3-Bisphosphoglyceric acid and Ap4A/P1,P4-bis(5'-adenosyl) tetraphosphate. Binding of an allosteric activator is a prerequisiste to magnesium and substrate binding. Inhibited by inorganic phosphate. Functionally, broad specificity cytosolic 5'-nucleotidase that catalyzes the dephosphorylation of 6-hydroxypurine nucleoside 5'-monophosphates. In addition, possesses a phosphotransferase activity by which it can transfer a phosphate from a donor nucleoside monophosphate to an acceptor nucleoside, preferably inosine, deoxyinosine and guanosine. Has the highest activities for IMP and GMP followed by dIMP, dGMP and XMP. Could also catalyze the transfer of phosphates from pyrimidine monophosphates but with lower efficiency. Through these activities regulates the purine nucleoside/nucleotide pools within the cell. The polypeptide is Cytosolic purine 5'-nucleotidase (Bos taurus (Bovine)).